A 167-amino-acid polypeptide reads, in one-letter code: Thioredoxin Y2, chloroplastic (167 aa).

Residues 1–58 constitute a chloroplast transit peptide; sequence MAISLATAYISPCFTPESSNSASPSRTLSSVRLPSQIRRFGSVQSPSSSTRFAPLTVR. The region spanning 59 to 164 is the Thioredoxin domain; sequence AAKKQTFNSF…LVERIENSLQ (106 aa). Residues Cys88 and Cys91 each act as nucleophile in the active site. A disulfide bridge links Cys88 with Cys91.

This sequence belongs to the thioredoxin family. Plant Y-type subfamily. In terms of tissue distribution, expressed in leaves.

The protein localises to the plastid. Its subcellular location is the chloroplast stroma. Its function is as follows. Thiol-disulfide oxidoreductase that poorly activates chloroplastic malate dehydrogenase (NADP-MDH) and fructose-1,6-bisphosphatase. Provides reducing equivalents for peroxiredoxin Q. In Arabidopsis thaliana (Mouse-ear cress), this protein is Thioredoxin Y2, chloroplastic.